The following is a 357-amino-acid chain: Biotin synthase (357 aa).

A disordered region spans residues Met1–Thr27. A compositionally biased stretch (low complexity) spans Ala9–Thr27. Residues Asp78–Arg303 enclose the Radical SAM core domain. Residues Cys93, Cys97, and Cys100 each coordinate [4Fe-4S] cluster. The [2Fe-2S] cluster site is built by Cys136, Cys228, and Arg298.

It belongs to the radical SAM superfamily. Biotin synthase family. Homodimer. Requires [4Fe-4S] cluster as cofactor. It depends on [2Fe-2S] cluster as a cofactor.

It carries out the reaction (4R,5S)-dethiobiotin + (sulfur carrier)-SH + 2 reduced [2Fe-2S]-[ferredoxin] + 2 S-adenosyl-L-methionine = (sulfur carrier)-H + biotin + 2 5'-deoxyadenosine + 2 L-methionine + 2 oxidized [2Fe-2S]-[ferredoxin]. It participates in cofactor biosynthesis; biotin biosynthesis; biotin from 7,8-diaminononanoate: step 2/2. In terms of biological role, catalyzes the conversion of dethiobiotin (DTB) to biotin by the insertion of a sulfur atom into dethiobiotin via a radical-based mechanism. This Corynebacterium jeikeium (strain K411) protein is Biotin synthase.